The following is a 486-amino-acid chain: Recombining binding protein suppressor of hairless (486 aa).

DNA-binding stretches follow at residues 43 to 53 (QKSYGNEKRFF) and 151 to 156 (SKPSKK). N6-acetyllysine is present on Lys-161. Residues 178–183 (RLRSQT) form a DNA-binding region. An IPT/TIG domain is found at 341 to 431 (PVVESLQLNG…YSTSLTFTYT (91 aa)). Polar residues predominate over residues 451–467 (SSQVPPNESNTNSEGSY). The segment at 451–486 (SSQVPPNESNTNSEGSYTNASTNSTSVTSSTATVVS) is disordered. Residues 468-486 (TNASTNSTSVTSSTATVVS) show a composition bias toward low complexity.

Belongs to the Su(H) family. Interacts with activated NOTCH1, NOTCH2 or NOTCH3. Interacts with MINT/SHARP. This interaction may mediate the recruitment of large corepressor complexes containing proteins such as HDAC1, HDAC2, NCOR2, SAP30, FHL1/KYOT2 and CIR1. Interacts with EP300, MAML1 and PTF1A. Interacts with RITA1, leading to nuclear export, prevent the interaction between RBPJ and NICD product and subsequent down-regulation of the Notch signaling pathway. Interacts with SNW1. Interacts with CHCHD2 and CXXC5. Interacts with BEND6 (via BEN domain). Interacts with NKAPL. Interacts with ZMIZ1. Interacts with RBM15. Interacts with L3MBTL3 and KDM1A; the interaction with KDM1A is weaker in the absence of L3MBTL3 and the interaction with L3MBTL3 is impaired by Notch-derived peptides containing the intracellular domain (NICD).

The protein resides in the nucleus. It is found in the cytoplasm. Transcriptional regulator that plays a central role in Notch signaling, a signaling pathway involved in cell-cell communication that regulates a broad spectrum of cell-fate determinations. Acts as a transcriptional repressor when it is not associated with Notch proteins. When associated with some NICD product of Notch proteins (Notch intracellular domain), it acts as a transcriptional activator that activates transcription of Notch target genes. Probably represses or activates transcription via the recruitment of chromatin remodeling complexes containing histone deacetylase or histone acetylase proteins, respectively. Specifically binds to the immunoglobulin kappa-type J segment recombination signal sequence. Binds specifically to methylated DNA. Binds to the oxygen responsive element of COX4I2 and activates its transcription under hypoxia conditions (4% oxygen). Negatively regulates the phagocyte oxidative burst in response to bacterial infection by repressing transcription of NADPH oxidase subunits. The protein is Recombining binding protein suppressor of hairless (RBPJ) of Pongo abelii (Sumatran orangutan).